Reading from the N-terminus, the 737-residue chain is Phosphoribosylformylglycinamidine synthase subunit PurL (737 aa).

Histidine 50 is an active-site residue. ATP is bound by residues tyrosine 53 and lysine 92. Glutamate 94 is a Mg(2+) binding site. Residues 95-98 (SHNH) and arginine 117 contribute to the substrate site. Histidine 96 (proton acceptor) is an active-site residue. Aspartate 118 provides a ligand contact to Mg(2+). Glutamine 241 contacts substrate. Aspartate 269 is a Mg(2+) binding site. Residue 313–315 (ESQ) coordinates substrate. Residues aspartate 494 and glycine 531 each contribute to the ATP site. Asparagine 532 contributes to the Mg(2+) binding site. Serine 534 is a binding site for substrate.

It belongs to the FGAMS family. In terms of assembly, monomer. Part of the FGAM synthase complex composed of 1 PurL, 1 PurQ and 2 PurS subunits.

Its subcellular location is the cytoplasm. The catalysed reaction is N(2)-formyl-N(1)-(5-phospho-beta-D-ribosyl)glycinamide + L-glutamine + ATP + H2O = 2-formamido-N(1)-(5-O-phospho-beta-D-ribosyl)acetamidine + L-glutamate + ADP + phosphate + H(+). Its pathway is purine metabolism; IMP biosynthesis via de novo pathway; 5-amino-1-(5-phospho-D-ribosyl)imidazole from N(2)-formyl-N(1)-(5-phospho-D-ribosyl)glycinamide: step 1/2. Functionally, part of the phosphoribosylformylglycinamidine synthase complex involved in the purines biosynthetic pathway. Catalyzes the ATP-dependent conversion of formylglycinamide ribonucleotide (FGAR) and glutamine to yield formylglycinamidine ribonucleotide (FGAM) and glutamate. The FGAM synthase complex is composed of three subunits. PurQ produces an ammonia molecule by converting glutamine to glutamate. PurL transfers the ammonia molecule to FGAR to form FGAM in an ATP-dependent manner. PurS interacts with PurQ and PurL and is thought to assist in the transfer of the ammonia molecule from PurQ to PurL. This chain is Phosphoribosylformylglycinamidine synthase subunit PurL, found in Nitrobacter winogradskyi (strain ATCC 25391 / DSM 10237 / CIP 104748 / NCIMB 11846 / Nb-255).